Consider the following 687-residue polypeptide: Glycine--tRNA ligase beta subunit (687 aa).

The protein belongs to the class-II aminoacyl-tRNA synthetase family. As to quaternary structure, tetramer of two alpha and two beta subunits.

The protein resides in the cytoplasm. It carries out the reaction tRNA(Gly) + glycine + ATP = glycyl-tRNA(Gly) + AMP + diphosphate. In Neisseria meningitidis serogroup A / serotype 4A (strain DSM 15465 / Z2491), this protein is Glycine--tRNA ligase beta subunit.